We begin with the raw amino-acid sequence, 474 residues long: Bifunctional protein HldE (474 aa).

A ribokinase region spans residues 1–318; the sequence is MKLSMPRFDQ…RAIQREEGSE (318 aa). 194 to 197 provides a ligand contact to ATP; that stretch reads NLSE. The active site involves Asp-263. Positions 343–474 are cytidylyltransferase; that stretch reads FTNGCFDILH…AIVEKIRGQG (132 aa).

This sequence in the N-terminal section; belongs to the carbohydrate kinase PfkB family. The protein in the C-terminal section; belongs to the cytidylyltransferase family. In terms of assembly, homodimer.

It carries out the reaction D-glycero-beta-D-manno-heptose 7-phosphate + ATP = D-glycero-beta-D-manno-heptose 1,7-bisphosphate + ADP + H(+). It catalyses the reaction D-glycero-beta-D-manno-heptose 1-phosphate + ATP + H(+) = ADP-D-glycero-beta-D-manno-heptose + diphosphate. Its pathway is nucleotide-sugar biosynthesis; ADP-L-glycero-beta-D-manno-heptose biosynthesis; ADP-L-glycero-beta-D-manno-heptose from D-glycero-beta-D-manno-heptose 7-phosphate: step 1/4. It functions in the pathway nucleotide-sugar biosynthesis; ADP-L-glycero-beta-D-manno-heptose biosynthesis; ADP-L-glycero-beta-D-manno-heptose from D-glycero-beta-D-manno-heptose 7-phosphate: step 3/4. Catalyzes the phosphorylation of D-glycero-D-manno-heptose 7-phosphate at the C-1 position to selectively form D-glycero-beta-D-manno-heptose-1,7-bisphosphate. Functionally, catalyzes the ADP transfer from ATP to D-glycero-beta-D-manno-heptose 1-phosphate, yielding ADP-D-glycero-beta-D-manno-heptose. The chain is Bifunctional protein HldE from Pseudomonas syringae pv. tomato (strain ATCC BAA-871 / DC3000).